The following is a 216-amino-acid chain: Protein U63 (216 aa).

Belongs to the herpesviridae UL92 family.

This Homo sapiens (Human) protein is Protein U63 (U63).